A 135-amino-acid polypeptide reads, in one-letter code: MSQTANQKAKRIPLGKDASTKRRLSKVRRHFRLRKKVSGTPERPRLVVNRSARHIHVQLVDDLAGHTLAAASTTEADVRAADGDKKALSAKVGQLIAERAKAAGVEAVVFDHGGHGYHGRIAALADAAREGGLKF.

The interval 1 to 23 is disordered; that stretch reads MSQTANQKAKRIPLGKDASTKRR.

This sequence belongs to the universal ribosomal protein uL18 family. In terms of assembly, part of the 50S ribosomal subunit; part of the 5S rRNA/L5/L18/L25 subcomplex. Contacts the 5S and 23S rRNAs.

In terms of biological role, this is one of the proteins that bind and probably mediate the attachment of the 5S RNA into the large ribosomal subunit, where it forms part of the central protuberance. The chain is Large ribosomal subunit protein uL18 from Rhodococcus jostii (strain RHA1).